Here is a 72-residue protein sequence, read N- to C-terminus: Translation initiation factor IF-1 (72 aa).

Residues 1-72 enclose the S1-like domain; the sequence is MAKSDVIEVE…SKGRITYRFK (72 aa).

This sequence belongs to the IF-1 family. As to quaternary structure, component of the 30S ribosomal translation pre-initiation complex which assembles on the 30S ribosome in the order IF-2 and IF-3, IF-1 and N-formylmethionyl-tRNA(fMet); mRNA recruitment can occur at any time during PIC assembly.

Its subcellular location is the cytoplasm. Its function is as follows. One of the essential components for the initiation of protein synthesis. Stabilizes the binding of IF-2 and IF-3 on the 30S subunit to which N-formylmethionyl-tRNA(fMet) subsequently binds. Helps modulate mRNA selection, yielding the 30S pre-initiation complex (PIC). Upon addition of the 50S ribosomal subunit IF-1, IF-2 and IF-3 are released leaving the mature 70S translation initiation complex. The chain is Translation initiation factor IF-1 from Levilactobacillus brevis (strain ATCC 367 / BCRC 12310 / CIP 105137 / JCM 1170 / LMG 11437 / NCIMB 947 / NCTC 947) (Lactobacillus brevis).